The sequence spans 345 residues: MKVGIVGATGYGGLELIRLLSQHPNVEEIICYSSSQEGLPLDDMYPHLSGNVRWTLKAIDPEAIRADVDTVFLATPPGVSGELTPDLVKLGLKVIDLSGDLRINEPDVYEAWYKRQAAPVGTIRGAVYGLTEWQRDEIAAAQIIANPGCYPTAVLLGLAPLVQQKWIDPKRIIIDAKSGTSGAGRNPSQITHFSEMNENFKIYQVNQHKHTPEIEQQLRNWDESVGNVTFSTHLVPMVRGIMATIYAEANQAISEKELREHFAYVYETSPFVHVYSEGRYPATKEVFGSNRCHIGVTYDERTNRITVVSVIDNLVKGAAGQAIQNYNVMNGYEETLGLEGSPLYP.

C149 is an active-site residue.

Belongs to the NAGSA dehydrogenase family. Type 1 subfamily.

Its subcellular location is the cytoplasm. The catalysed reaction is N-acetyl-L-glutamate 5-semialdehyde + phosphate + NADP(+) = N-acetyl-L-glutamyl 5-phosphate + NADPH + H(+). Its pathway is amino-acid biosynthesis; L-arginine biosynthesis; N(2)-acetyl-L-ornithine from L-glutamate: step 3/4. Its function is as follows. Catalyzes the NADPH-dependent reduction of N-acetyl-5-glutamyl phosphate to yield N-acetyl-L-glutamate 5-semialdehyde. The polypeptide is N-acetyl-gamma-glutamyl-phosphate reductase (Halalkalibacterium halodurans (strain ATCC BAA-125 / DSM 18197 / FERM 7344 / JCM 9153 / C-125) (Bacillus halodurans)).